Reading from the N-terminus, the 393-residue chain is NAD(P)H-quinone oxidoreductase subunit H, chloroplastic (393 aa).

Belongs to the complex I 49 kDa subunit family. NDH is composed of at least 16 different subunits, 5 of which are encoded in the nucleus.

The protein localises to the plastid. Its subcellular location is the chloroplast thylakoid membrane. It carries out the reaction a plastoquinone + NADH + (n+1) H(+)(in) = a plastoquinol + NAD(+) + n H(+)(out). It catalyses the reaction a plastoquinone + NADPH + (n+1) H(+)(in) = a plastoquinol + NADP(+) + n H(+)(out). Functionally, NDH shuttles electrons from NAD(P)H:plastoquinone, via FMN and iron-sulfur (Fe-S) centers, to quinones in the photosynthetic chain and possibly in a chloroplast respiratory chain. The immediate electron acceptor for the enzyme in this species is believed to be plastoquinone. Couples the redox reaction to proton translocation, and thus conserves the redox energy in a proton gradient. In Cicer arietinum (Chickpea), this protein is NAD(P)H-quinone oxidoreductase subunit H, chloroplastic.